Consider the following 185-residue polypeptide: Ribosome-recycling factor (185 aa).

Belongs to the RRF family.

It is found in the cytoplasm. Responsible for the release of ribosomes from messenger RNA at the termination of protein biosynthesis. May increase the efficiency of translation by recycling ribosomes from one round of translation to another. The chain is Ribosome-recycling factor from Francisella philomiragia subsp. philomiragia (strain ATCC 25017 / CCUG 19701 / FSC 153 / O#319-036).